We begin with the raw amino-acid sequence, 214 residues long: 3,4-dihydroxy-2-butanone 4-phosphate synthase (214 aa).

D-ribulose 5-phosphate is bound by residues 37–38, D42, 150–154, and E174; these read RE and RRGHT. Residue E38 coordinates Mg(2+). H153 contributes to the Mg(2+) binding site.

This sequence belongs to the DHBP synthase family. In terms of assembly, homodimer. The cofactor is Mg(2+). Requires Mn(2+) as cofactor.

The enzyme catalyses D-ribulose 5-phosphate = (2S)-2-hydroxy-3-oxobutyl phosphate + formate + H(+). Its pathway is cofactor biosynthesis; riboflavin biosynthesis; 2-hydroxy-3-oxobutyl phosphate from D-ribulose 5-phosphate: step 1/1. In terms of biological role, catalyzes the conversion of D-ribulose 5-phosphate to formate and 3,4-dihydroxy-2-butanone 4-phosphate. The sequence is that of 3,4-dihydroxy-2-butanone 4-phosphate synthase from Desulfotalea psychrophila (strain LSv54 / DSM 12343).